The following is a 78-amino-acid chain: Major outer membrane lipoprotein Lpp (78 aa).

The N-terminal stretch at 1–20 (MNRTKIVLGAVVLASTLLAG) is a signal peptide. The N-palmitoyl cysteine moiety is linked to residue Cys21. The S-diacylglycerol cysteine moiety is linked to residue Cys21. 2 consecutive repeats follow at residues 24-34 (TAKVDQLTSDI) and 38-48 (NAKVDQLSNDV). Residues 27–75 (VDQLTSDIQTLNAKVDQLSNDVNAVHTDVQAAKDDAARANQRLDNQVRS) adopt a coiled-coil conformation. Lys78 carries the N6-murein peptidoglycan lysine modification.

Belongs to the Lpp family. In terms of assembly, homotrimer.

It localises to the cell outer membrane. Its subcellular location is the secreted. The protein localises to the cell wall. A highly abundant outer membrane lipoprotein that controls the distance between the inner and outer membranes. The only protein known to be covalently linked to the peptidoglycan network (PGN). Also non-covalently binds the PGN. The link between the cell outer membrane and PGN contributes to maintenance of the structural and functional integrity of the cell envelope, and maintains the correct distance between the PGN and the outer membrane. This chain is Major outer membrane lipoprotein Lpp, found in Photorhabdus laumondii subsp. laumondii (strain DSM 15139 / CIP 105565 / TT01) (Photorhabdus luminescens subsp. laumondii).